A 120-amino-acid chain; its full sequence is MFLLHEYDIFWAFLIISSVIPILAFLISGVLAPIREGPEKLSSYESGIEPMGDAWLQFRIRYYMFALVFVVFDVETVFLYPWAMSFDVLGVSVFIEALIFVLIPIVGSVYAWRKGALEWS.

Transmembrane regions (helical) follow at residues 9-29 (IFWAFLIISSVIPILAFLISG), 64-84 (MFALVFVVFDVETVFLYPWAM), and 88-108 (VLGVSVFIEALIFVLIPIVGS).

This sequence belongs to the complex I subunit 3 family. As to quaternary structure, NDH is composed of at least 16 different subunits, 5 of which are encoded in the nucleus.

It localises to the plastid. The protein resides in the chloroplast thylakoid membrane. The enzyme catalyses a plastoquinone + NADH + (n+1) H(+)(in) = a plastoquinol + NAD(+) + n H(+)(out). It carries out the reaction a plastoquinone + NADPH + (n+1) H(+)(in) = a plastoquinol + NADP(+) + n H(+)(out). NDH shuttles electrons from NAD(P)H:plastoquinone, via FMN and iron-sulfur (Fe-S) centers, to quinones in the photosynthetic chain and possibly in a chloroplast respiratory chain. The immediate electron acceptor for the enzyme in this species is believed to be plastoquinone. Couples the redox reaction to proton translocation, and thus conserves the redox energy in a proton gradient. The protein is NAD(P)H-quinone oxidoreductase subunit 3, chloroplastic of Calycanthus floridus var. glaucus (Eastern sweetshrub).